A 340-amino-acid chain; its full sequence is Protein LSM14 homolog car-1 (340 aa).

Residues 1–81 (MSNQTPYIGS…IKDLIVCDTP (81 aa)) enclose the Sm domain. Residues 101-125 (SRSAPASDGAPAASAGSSRAGTPSR) are compositionally biased toward low complexity. Residues 101 to 148 (SRSAPASDGAPAASAGSSRAGTPSRNSPLGQIIQNQRPGRGGYQQNFQ) are disordered. Polar residues predominate over residues 126 to 148 (NSPLGQIIQNQRPGRGGYQQNFQ). The region spanning 178-214 (VNHREKLKFESDFDFEKANEKFQEVLVDNLEKLNIED) is the DFDF domain. Residues 227 to 243 (AFYDKKTSFFDNISCES) carry the FFD box motif. The TFG box signature appears at 251-271 (TGRPDWKKERETNQETFGHNA). The tract at residues 277-340 (YRRGFGGRGR…QGNTAAAAEQ (64 aa)) is disordered. Residues 280-296 (GFGGRGRGGNRGYGGYN) are compositionally biased toward gly residues. The segment covering 312 to 325 (GYRQNNGGYRRGGY) has biased composition (low complexity).

This sequence belongs to the LSM14 family.

It localises to the nucleus. Its function is as follows. Transcriptional regulator. Involved in modulating embryonic expression of ATP-dependent chaperone cdc-48.1. May play a role in mRNA gene silencing, and RNA granule (P-body) assembly. This Caenorhabditis elegans protein is Protein LSM14 homolog car-1.